Consider the following 319-residue polypeptide: MVGKMWPVLWTLCAVRVTVDAISVETPQDVLRASQGKSVTLPCTYHTSTSSREGLIQWDKLLLTHTERVVIWPFSNKNYIHGELYKNRVSISNNAEQSDASITIDQLTMADNGTYECSVSLMSDLEGNTKSRVRLLVLVPPSKPECGIEGETIIGNNIQLTCQSKEGSPTPQYSWKRYNILNQEQPLAQPASGQPVSLKNISTDTSGYYICTSSNEEGTQFCNITVAVRSPSMNVALYVGIAVGVVAALIIIGIIIYCCCCRGKDDNTEDKEDARPNREAYEEPPEQLRELSREREEEDDYRQEEQRSTGRESPDHLDQ.

The N-terminal stretch at 1–21 is a signal peptide; it reads MVGKMWPVLWTLCAVRVTVDA. In terms of domain architecture, Ig-like V-type spans 22-134; that stretch reads ISVETPQDVL…LEGNTKSRVR (113 aa). Over 22–235 the chain is Extracellular; it reads ISVETPQDVL…VAVRSPSMNV (214 aa). Disulfide bonds link Cys-43–Cys-117, Cys-146–Cys-222, and Cys-162–Cys-211. Asn-112, Asn-200, and Asn-223 each carry an N-linked (GlcNAc...) asparagine glycan. The 88-residue stretch at 140–227 folds into the Ig-like C2-type domain; sequence PPSKPECGIE…GTQFCNITVA (88 aa). Residues 236 to 256 form a helical membrane-spanning segment; it reads ALYVGIAVGVVAALIIIGIII. Over 257–319 the chain is Cytoplasmic; sequence YCCCCRGKDD…GRESPDHLDQ (63 aa). Composition is skewed to basic and acidic residues over residues 267-295 and 303-319; these read NTEDKEDARPNREAYEEPPEQLRELSRER and QEEQRSTGRESPDHLDQ. Residues 267-319 form a disordered region; sequence NTEDKEDARPNREAYEEPPEQLRELSREREEEDDYRQEEQRSTGRESPDHLDQ.

Post-translationally, N-glycosylated, contains approximately 8 kDa of N-linked carbohydrate. Palmitoylated. As to expression, expressed in normal gastrointestinal epithelium and in 95% of colon cancers.

It is found in the membrane. May play a role in cell-cell recognition and signaling. The protein is Cell surface A33 antigen (GPA33) of Homo sapiens (Human).